Consider the following 65-residue polypeptide: uncharacterized protein (65 aa).

This is an uncharacterized protein from Acheta domesticus (House cricket).